The following is an 865-amino-acid chain: Alanine--tRNA ligase (865 aa).

Zn(2+)-binding residues include histidine 554, histidine 558, cysteine 656, and histidine 660.

This sequence belongs to the class-II aminoacyl-tRNA synthetase family. Requires Zn(2+) as cofactor.

Its subcellular location is the cytoplasm. The enzyme catalyses tRNA(Ala) + L-alanine + ATP = L-alanyl-tRNA(Ala) + AMP + diphosphate. Functionally, catalyzes the attachment of alanine to tRNA(Ala) in a two-step reaction: alanine is first activated by ATP to form Ala-AMP and then transferred to the acceptor end of tRNA(Ala). Also edits incorrectly charged Ser-tRNA(Ala) and Gly-tRNA(Ala) via its editing domain. The sequence is that of Alanine--tRNA ligase from Francisella philomiragia subsp. philomiragia (strain ATCC 25017 / CCUG 19701 / FSC 153 / O#319-036).